A 241-amino-acid chain; its full sequence is Ashwin (241 aa).

Disordered stretches follow at residues Met1–Ser21, Lys82–Ala102, and Lys212–Pro241. Over residues Gly11–Ser21 the composition is skewed to basic and acidic residues.

Belongs to the ashwin family.

The protein localises to the nucleus. The polypeptide is Ashwin (Gallus gallus (Chicken)).